Consider the following 134-residue polypeptide: Isocitrate dehydrogenase [NAD] subunit alpha, mitochondrial (134 aa).

Residue Lys-37 is modified to N6-succinyllysine. Thr-50 is subject to Phosphothreonine. Residues Arg-64, Arg-74, and Arg-95 each coordinate substrate.

This sequence belongs to the isocitrate and isopropylmalate dehydrogenases family. Heterooligomer of subunits alpha (IDH3A), beta (IDH3B), and gamma (IDH3G) in the apparent ratio of 2:1:1. The heterodimer containing one IDH3A and one IDH3B subunit and the heterodimer containing one IDH3A and one IDH3G subunit assemble into a heterotetramer (which contains two subunits of IDH3A, one of IDH3B and one of IDH3G) and further into the heterooctamer. It depends on Mg(2+) as a cofactor. Mn(2+) is required as a cofactor.

Its subcellular location is the mitochondrion. It carries out the reaction D-threo-isocitrate + NAD(+) = 2-oxoglutarate + CO2 + NADH. With respect to regulation, the heterotetramer and the heterodimer composed of IDH3A and IDH3G subunits can be allosterically activated by citrate (CIT) or/and ADP, and the two activators can act independently or synergistically. The heterodimer composed of IDH3A and IDH3B subunits cannot be allosterically regulated and the allosteric regulation of the heterotetramer is through the IDH3G subunit and not the IDH3B subunit. The IDH3G subunit contains the allosteric site which consists of a CIT-binding site and an ADP-binding site, and the binding of CIT and ADP causes conformational changes at the allosteric site which are transmitted to the active site in the catalytic subunit (IDH3A) through a cascade of conformational changes at the heterodimer interface, leading to stabilization of the isocitrate-binding at the active site and thus activation of the enzyme. ATP can activate the heterotetramer and the heterodimer composed of IDH3A and IDH3G subunits at low concentrations but inhibits their activities at high concentrations, whereas ATP exhibits only inhibitory effect on the heterodimer composed of IDH3A and IDH3B subunits. In terms of biological role, catalytic subunit of the enzyme which catalyzes the decarboxylation of isocitrate (ICT) into alpha-ketoglutarate. The heterodimer composed of the alpha (IDH3A) and beta (IDH3B) subunits and the heterodimer composed of the alpha (IDH3A) and gamma (IDH3G) subunits, have considerable basal activity but the full activity of the heterotetramer (containing two subunits of IDH3A, one of IDH3B and one of IDH3G) requires the assembly and cooperative function of both heterodimers. This Mesocricetus auratus (Golden hamster) protein is Isocitrate dehydrogenase [NAD] subunit alpha, mitochondrial.